A 115-amino-acid polypeptide reads, in one-letter code: Salivary anti-complement protein (115 aa).

The signal sequence occupies residues 1-22; that stretch reads MKFFYLIFSAIFFLADPALVKC. Intrachain disulfides connect Cys-26/Cys-108, Cys-41/Cys-92, and Cys-83/Cys-101.

May form multimers. Salivary gland (at protein level).

The protein resides in the secreted. In terms of biological role, salivary protein that inhibits the classical pathway of complement system activation in the host while having no inhibitory effect on the alternative or lectin pathways. Prevent cleavage of host C4 and consequently impairs the activation of factors downstream of C4b in the complement cascade. The polypeptide is Salivary anti-complement protein (Lutzomyia longipalpis (Sand fly)).